Consider the following 395-residue polypeptide: GTPase Obg (395 aa).

One can recognise an Obg domain in the interval 1 to 159 (MQFVDEASII…RNLRFEMKVM (159 aa)). The disordered stretch occupies residues 128 to 147 (IHFKSSTNRAPRKTTPGTEG). The OBG-type G domain maps to 160–333 (ADVGLLGVPN…LVQAAHRWLT (174 aa)). GTP contacts are provided by residues 166-173 (GVPNAGKS), 191-195 (FTTLV), 213-216 (DVPG), 283-286 (NKLD), and 314-316 (SAI). Residues Ser-173 and Thr-193 each contribute to the Mg(2+) site. Positions 340–368 (AEDETAFEHEREMRRRMEDEAVARAEARM) are enriched in basic and acidic residues. The tract at residues 340-395 (AEDETAFEHEREMRRRMEDEAVARAEARMSRKRKPAEDDDDDFDEDDYDVEVEYAP) is disordered. The span at 376 to 395 (EDDDDDFDEDDYDVEVEYAP) shows a compositional bias: acidic residues.

This sequence belongs to the TRAFAC class OBG-HflX-like GTPase superfamily. OBG GTPase family. In terms of assembly, monomer. The cofactor is Mg(2+).

The protein resides in the cytoplasm. Its function is as follows. An essential GTPase which binds GTP, GDP and possibly (p)ppGpp with moderate affinity, with high nucleotide exchange rates and a fairly low GTP hydrolysis rate. Plays a role in control of the cell cycle, stress response, ribosome biogenesis and in those bacteria that undergo differentiation, in morphogenesis control. The sequence is that of GTPase Obg from Chromohalobacter salexigens (strain ATCC BAA-138 / DSM 3043 / CIP 106854 / NCIMB 13768 / 1H11).